The sequence spans 301 residues: Recombination-associated protein RdgC (301 aa).

The protein belongs to the RdgC family.

Its subcellular location is the cytoplasm. The protein resides in the nucleoid. May be involved in recombination. This is Recombination-associated protein RdgC from Stenotrophomonas maltophilia (strain R551-3).